Consider the following 238-residue polypeptide: Auxin-responsive protein IAA2 (238 aa).

The EAR-like (transcriptional repression) signature appears at Leu-24–Leu-28. Composition is skewed to low complexity over residues Ser-33–Ser-44, Ala-59–Ala-69, and Ala-85–Gln-94. 2 disordered regions span residues Ser-33–Ala-69 and Arg-82–Gly-114. The PB1 domain occupies Gly-118–Ser-216. The tract at residues Ser-217–Ser-238 is disordered. The span at Gly-229–Ser-238 shows a compositional bias: basic residues.

The protein belongs to the Aux/IAA family. As to quaternary structure, homodimers and heterodimers. Highly expressed in flowers.

It localises to the nucleus. Aux/IAA proteins are short-lived transcriptional factors that function as repressors of early auxin response genes at low auxin concentrations. In Oryza sativa subsp. japonica (Rice), this protein is Auxin-responsive protein IAA2 (IAA2).